The primary structure comprises 639 residues: Carbon monoxide dehydrogenase (639 aa).

Residues Cys-41, Cys-49, Cys-50, Cys-53, Cys-58, and Cys-72 each contribute to the [4Fe-4S] cluster site. [Ni-4Fe-4S] cluster contacts are provided by His-265, Cys-300, Cys-338, Cys-451, Cys-481, and Cys-531.

The protein belongs to the Ni-containing carbon monoxide dehydrogenase family. In terms of assembly, homodimer. Requires [4Fe-4S] cluster as cofactor. [Ni-4Fe-4S] cluster serves as cofactor.

Its subcellular location is the cytoplasm. It is found in the cell inner membrane. The enzyme catalyses CO + 2 oxidized [2Fe-2S]-[ferredoxin] + H2O = 2 reduced [2Fe-2S]-[ferredoxin] + CO2 + 2 H(+). Its function is as follows. Allows growth in a CO-dependent manner in the dark. CODH oxidizes carbon monoxide coupled, via CooF, to the reduction of a hydrogen cation by a hydrogenase (possibly CooH). The polypeptide is Carbon monoxide dehydrogenase (cooS) (Rhodospirillum rubrum).